A 285-amino-acid polypeptide reads, in one-letter code: Putative ankyrin repeat protein R551 (285 aa).

4 ANK repeats span residues 99–129 (DLKSGILNSVKYHQSKLINILLDKNIDPIKI), 157–186 (NDFDFVYPLAAHGELDIIKLVMHYYQLQDE), 188–214 (IGKICVQAIMNGRVNIVEHFLTSEAFR), and 215–249 (SAPDLMYGFFIRGIEHGGHINITKYFIDKGLCIQQ).

This is Putative ankyrin repeat protein R551 from Acanthamoeba polyphaga (Amoeba).